Consider the following 132-residue polypeptide: Small ribosomal subunit protein uS8 (132 aa).

The protein belongs to the universal ribosomal protein uS8 family. As to quaternary structure, part of the 30S ribosomal subunit. Contacts proteins S5 and S12.

Its function is as follows. One of the primary rRNA binding proteins, it binds directly to 16S rRNA central domain where it helps coordinate assembly of the platform of the 30S subunit. The chain is Small ribosomal subunit protein uS8 from Anaeromyxobacter sp. (strain Fw109-5).